The sequence spans 298 residues: N-acetylmuramic acid 6-phosphate etherase (298 aa).

The SIS domain maps to 55 to 218 (IHAQVSGGGR…STGLMIKSGK (164 aa)). The active-site Proton donor is Glu-83. Glu-114 is a catalytic residue.

It belongs to the GCKR-like family. MurNAc-6-P etherase subfamily. As to quaternary structure, homodimer.

It catalyses the reaction N-acetyl-D-muramate 6-phosphate + H2O = N-acetyl-D-glucosamine 6-phosphate + (R)-lactate. The protein operates within amino-sugar metabolism; 1,6-anhydro-N-acetylmuramate degradation. It participates in amino-sugar metabolism; N-acetylmuramate degradation. Its pathway is cell wall biogenesis; peptidoglycan recycling. Functionally, specifically catalyzes the cleavage of the D-lactyl ether substituent of MurNAc 6-phosphate, producing GlcNAc 6-phosphate and D-lactate. Together with AnmK, is also required for the utilization of anhydro-N-acetylmuramic acid (anhMurNAc) either imported from the medium or derived from its own cell wall murein, and thus plays a role in cell wall recycling. This chain is N-acetylmuramic acid 6-phosphate etherase, found in Shigella dysenteriae serotype 1 (strain Sd197).